Here is a 130-residue protein sequence, read N- to C-terminus: Small ribosomal subunit protein uS11 (130 aa).

The protein belongs to the universal ribosomal protein uS11 family. Part of the 30S ribosomal subunit. Interacts with proteins S7 and S18. Binds to IF-3.

In terms of biological role, located on the platform of the 30S subunit, it bridges several disparate RNA helices of the 16S rRNA. Forms part of the Shine-Dalgarno cleft in the 70S ribosome. This Thiobacillus denitrificans (strain ATCC 25259 / T1) protein is Small ribosomal subunit protein uS11.